The primary structure comprises 1676 residues: DNA-directed RNA polymerase subunit beta'-beta'' (1676 aa).

The segment at 1 to 582 is DNA-directed RNA polymerase subunit beta'; it reads MCDAIQIRLA…FLKTTPGRII (582 aa). Zn(2+)-binding residues include Cys64, Cys66, Cys79, and Cys82. Mg(2+) is bound by residues Asp454, Asp456, and Asp458. Residues 583 to 1676 form a DNA-directed RNA polymerase subunit beta'' region; the sequence is FYQQAAYHVG…IPAGTGAKYL (1094 aa). Cys804, Cys859, Cys866, and Cys869 together coordinate Zn(2+).

This sequence in the N-terminal section; belongs to the RNA polymerase beta' chain family. RpoC1 subfamily. It in the C-terminal section; belongs to the RNA polymerase beta' chain family. RpoC2 subfamily. In terms of assembly, in plastids the minimal PEP RNA polymerase catalytic core is composed of four subunits: alpha, beta, beta', and beta''. When a (nuclear-encoded) sigma factor is associated with the core the holoenzyme is formed, which can initiate transcription. Beta' and beta'' are fused in this algae. Mg(2+) serves as cofactor. Zn(2+) is required as a cofactor.

The protein resides in the plastid. Its subcellular location is the chloroplast. It carries out the reaction RNA(n) + a ribonucleoside 5'-triphosphate = RNA(n+1) + diphosphate. DNA-dependent RNA polymerase catalyzes the transcription of DNA into RNA using the four ribonucleoside triphosphates as substrates. The protein is DNA-directed RNA polymerase subunit beta'-beta'' of Cyanidioschyzon merolae (strain NIES-3377 / 10D) (Unicellular red alga).